The following is a 556-amino-acid chain: Formate--tetrahydrofolate ligase (556 aa).

65 to 72 (TPAGEGKT) is an ATP binding site.

Belongs to the formate--tetrahydrofolate ligase family.

It carries out the reaction (6S)-5,6,7,8-tetrahydrofolate + formate + ATP = (6R)-10-formyltetrahydrofolate + ADP + phosphate. It functions in the pathway one-carbon metabolism; tetrahydrofolate interconversion. This Ruminiclostridium cellulolyticum (strain ATCC 35319 / DSM 5812 / JCM 6584 / H10) (Clostridium cellulolyticum) protein is Formate--tetrahydrofolate ligase.